The primary structure comprises 268 residues: Interleukin-1 alpha (268 aa).

A propeptide spanning residues 1-112 is cleaved from the precursor; the sequence is MAKVPDLFED…NTEEEIIKPR (112 aa). K82 carries the N6-acetyllysine modification. Residues 82–86 are nuclear localization signal (NLS); it reads KKRRL. S87 is modified (phosphoserine). N-linked (GlcNAc...) asparagine glycosylation is found at N102 and N141.

This sequence belongs to the IL-1 family. As to quaternary structure, monomer. Interacts with TMED10; the interaction mediates the translocation from the cytoplasm into the ERGIC (endoplasmic reticulum-Golgi intermediate compartment) and thereby secretion. Interacts with IL1R1. Interacts with S100A13; this interaction is the first step in the export of IL1A, followed by direct translocation of this complex across the plasma membrane. Post-translationally, acetylated within its nuclear localization sequence, which impacts subcellular localization. In terms of processing, proteolytic processed by CAPN1 in a calcium-dependent manner. Cleavage from 31 kDa precursor to 18 kDa biologically active molecules. Phosphorylated. Phosphorylation greatly enhances susceptibility to digestion and promotes the conversion of pre-IL1A alpha to the biologically active IL1A.

The protein localises to the nucleus. The protein resides in the cytoplasm. It is found in the secreted. Its function is as follows. Cytokine constitutively present intracellularly in nearly all resting non-hematopoietic cells that plays an important role in inflammation and bridges the innate and adaptive immune systems. After binding to its receptor IL1R1 together with its accessory protein IL1RAP, forms the high affinity interleukin-1 receptor complex. Signaling involves the recruitment of adapter molecules such as MYD88, IRAK1 or IRAK4. In turn, mediates the activation of NF-kappa-B and the three MAPK pathways p38, p42/p44 and JNK pathways. Within the cell, acts as an alarmin and cell death results in its liberation in the extracellular space after disruption of the cell membrane to induce inflammation and alert the host to injury or damage. In addition to its role as a danger signal, which occurs when the cytokine is passively released by cell necrosis, directly senses DNA damage and acts as signal for genotoxic stress without loss of cell integrity. The chain is Interleukin-1 alpha (IL1A) from Bos taurus (Bovine).